Reading from the N-terminus, the 1037-residue chain is MWAGGVGSPRRGMAPAPTDDLFARKLRQPARPPLTPNTFEPRPARGPLLRSGSDAGEVRPPTPASPRARAHSHEDASRPAATPTRLFTDPLALLGLPAEEPEPTFPPVLEPRWFAHYDVQSLLFDWAPRPRGTGSHTEANSGTLAEGQTTTSDLLLGAPGFVSELGGEGELGLGGPISPPVPPALPNAAVSVLEEPQTRTTTYSLEHADLGAGYYRKYFYGKEHQNFFGLDEALGPVAVSLRREEKEGSGGGTLHSYRVIVRTTQLRTLRGTISEDALPPGPPSVSPRKLLEHVAPRLSPTCLRLGSASPKVPRQLLTLDEQVLSFQRKGGILYCRAGQGSEEEMYNNQEAGAAFMQFLTLLGDVVRLKGFESYRAQLDTKTDSTGTHSLYTTYQDHEIMFHVSTMLPYTPNNQQQLLRKRHIGNDIVTIVFQEPGSKPFCPTTIRSHFQHVFLVVRAHAPCTPHTSYRVAVSRTQDTPAFGPALPEGGGPFAANADFRAFLLAKALNGEQAAGHARQFHAMATRTRQQYLQDLATNEVTTTSLDSASRFGLPSLGGRRRATPRSPGADVQAAGALMWGVRAAPGARVAAGAETSGPDDAEVPCLLGISAETLVLVAPRDGRVVFNCACRDVLAWTFSEHQLDLYHGRGEAITLRLDGAPGQAVGEVVARLQLVSRGCETRELALPRDGQGRLGFEVDAEGFITHVERFTFAETTGLRPGARLLRVCGQTLPKLGPETAAQMLRSAPKVCVTVLPPDESGRPRRSFSELYMLSLKEPSRRGGPEPVQDETGKLVILPPTKQLLHFCLKDSSSPPGPGDLTEERTEFLRTHNSLSSGSSLSDEAPVLPNTTPDLLLVTTANPSAPGTDRETPPSQDQSGSPSSHEDTSDSGPELRASILPRTLSLRNSISKIMSEAGSETLEDEWQSISEIASTCNTILESLSREGQPISESGDPKEALKCDSEPEPGSLSEKVSHLESMLWKLQEDLQREKADRAALEEEVRSLRHNNQRLLAESESAATRLLLASKHLGAPTTDLA.

Positions 1–85 are disordered; sequence MWAGGVGSPR…ASRPAATPTR (85 aa). Phosphothreonine is present on T62. Phosphoserine is present on residues S65, S178, S299, and S309. The Rap-GAP domain occupies 316–534; sequence LLTLDEQVLS…RTRQQYLQDL (219 aa). Residues 682–758 enclose the PDZ domain; that stretch reads ELALPRDGQG…VCVTVLPPDE (77 aa). Phosphoserine occurs at positions 812 and 834. Disordered regions lie at residues 830–849 and 855–898; these read HNSLSSGSSLSDEAPVLPNT and LVTT…ASIL. The segment covering 871-881 has biased composition (low complexity); it reads PPSQDQSGSPS. S907 is modified (phosphoserine). Residues 943–969 are disordered; it reads REGQPISESGDPKEALKCDSEPEPGSL. Residues 952 to 962 show a composition bias toward basic and acidic residues; that stretch reads GDPKEALKCDS. Residues 968–1025 adopt a coiled-coil conformation; it reads SLSEKVSHLESMLWKLQEDLQREKADRAALEEEVRSLRHNNQRLLAESESAATRLLLA.

Interacts with RRP1B; the interaction leads to inhibition of SIPA1 GTPase activity. As to expression, preferentially expressed in both fetal and adult lymphohematopoietic tissues.

The protein localises to the nucleus. It is found in the cytoplasm. It localises to the perinuclear region. Its subcellular location is the endomembrane system. Its function is as follows. GTPase activator for the nuclear Ras-related regulatory proteins Rap1, Rsr1 and Ran in vitro, converting them to the putatively inactive GDP-bound state. Affects cell cycle progression. The protein is Signal-induced proliferation-associated protein 1 (Sipa1) of Mus musculus (Mouse).